The primary structure comprises 87 residues: Small ribosomal subunit protein bS20 (87 aa).

The segment at 1 to 22 is disordered; it reads MANSAQARKRARQSVKQRAHNA. Over residues 7-19 the composition is skewed to basic residues; that stretch reads ARKRARQSVKQRA.

The protein belongs to the bacterial ribosomal protein bS20 family.

Its function is as follows. Binds directly to 16S ribosomal RNA. The polypeptide is Small ribosomal subunit protein bS20 (Neisseria gonorrhoeae (strain ATCC 700825 / FA 1090)).